The sequence spans 423 residues: MTESVLDYMTRLGRAAREASRVIGRASTAQKNRALQAAADALDAARAELAAANELDLAAGRASGLEPALLDRLALTPARIDGMITGLRQVASLPDPVGAIRDMSYRPSGIQVGKMRTPLGVIGIIYESRPNVTIDAASLCLKSGNATILRGGSEAIHSNRAIATCIQRGLAEAGLPAAVVQVVETTDREAVGALISMPEFVDVIVPRGGRGLIERISRDARVPVIKHLDGICHIYVSQHADLDKAWNVAFNAKTYRYGICGAMETLLVDQQVAERFLPEMARRFVEKGVELRGCERTQAIISAKPATEADWHTEYLDAILSIRVVDGLNQAIDHINHYGSHHTDSIISEHQGEARQFMAEVDSASVMLNTPTCFADGFEYGLGAEIGISTDKLHARGPVGLEGLTCEKYVVIGDGQLRGQGSC.

It belongs to the gamma-glutamyl phosphate reductase family.

Its subcellular location is the cytoplasm. The catalysed reaction is L-glutamate 5-semialdehyde + phosphate + NADP(+) = L-glutamyl 5-phosphate + NADPH + H(+). Its pathway is amino-acid biosynthesis; L-proline biosynthesis; L-glutamate 5-semialdehyde from L-glutamate: step 2/2. In terms of biological role, catalyzes the NADPH-dependent reduction of L-glutamate 5-phosphate into L-glutamate 5-semialdehyde and phosphate. The product spontaneously undergoes cyclization to form 1-pyrroline-5-carboxylate. The protein is Gamma-glutamyl phosphate reductase of Pseudomonas putida (strain ATCC 700007 / DSM 6899 / JCM 31910 / BCRC 17059 / LMG 24140 / F1).